Reading from the N-terminus, the 432-residue chain is Trigger factor (432 aa).

The PPIase FKBP-type domain maps to 161–246 (EDRVTIDFTG…LKKVEERELP (86 aa)).

This sequence belongs to the FKBP-type PPIase family. Tig subfamily. In terms of assembly, homodimer and monomer. In vivo most of the ribosomes are in complex with monomeric TF. Uncomplexed TF, however, is in a monomer-dimer equilibrium with approximately two thirds of TF existing in a dimeric state.

It localises to the cytoplasm. It carries out the reaction [protein]-peptidylproline (omega=180) = [protein]-peptidylproline (omega=0). Involved in protein export. Acts as a chaperone by maintaining the newly synthesized protein in an open conformation. Functions as a peptidyl-prolyl cis-trans isomerase. The protein is Trigger factor of Shigella boydii serotype 4 (strain Sb227).